A 518-amino-acid chain; its full sequence is Gypsy retrotransposon integrase-like protein 1 (518 aa).

In terms of domain architecture, Integrase catalytic spans 130-292 (QQHLPMVGNP…TPYFQMFNRN (163 aa)). A Phosphoserine modification is found at serine 498.

The protein is Gypsy retrotransposon integrase-like protein 1 (Gin1) of Mus musculus (Mouse).